The following is a 177-amino-acid chain: Peptide methionine sulfoxide reductase MsrA (177 aa).

Cys15 is an active-site residue.

Belongs to the MsrA Met sulfoxide reductase family.

It catalyses the reaction L-methionyl-[protein] + [thioredoxin]-disulfide + H2O = L-methionyl-(S)-S-oxide-[protein] + [thioredoxin]-dithiol. It carries out the reaction [thioredoxin]-disulfide + L-methionine + H2O = L-methionine (S)-S-oxide + [thioredoxin]-dithiol. Functionally, has an important function as a repair enzyme for proteins that have been inactivated by oxidation. Catalyzes the reversible oxidation-reduction of methionine sulfoxide in proteins to methionine. This chain is Peptide methionine sulfoxide reductase MsrA, found in Mycobacterium leprae (strain Br4923).